The primary structure comprises 237 residues: Alpha-S1-casein (237 aa).

The signal sequence occupies residues 1 to 15 (MKLLIFSCLVTLALA). Residues 39 to 60 (EDPIPVSEASSSEESVHQLNRD) are disordered. Ser79, Ser80, and Ser81 each carry phosphoserine.

The protein belongs to the alpha-casein family. In terms of tissue distribution, mammary gland specific. Secreted in milk.

Its subcellular location is the secreted. Important role in the capacity of milk to transport calcium phosphate. The chain is Alpha-S1-casein (CSN1S1) from Notamacropus eugenii (Tammar wallaby).